The chain runs to 260 residues: Ribose-5-phosphate isomerase A (260 aa).

Residues 33-36, 89-92, and 102-105 each bind substrate; these read TGST, DGAD, and KGGG. Glu-111 serves as the catalytic Proton acceptor. Residue Lys-129 coordinates substrate.

Belongs to the ribose 5-phosphate isomerase family. In terms of assembly, homodimer.

It carries out the reaction aldehydo-D-ribose 5-phosphate = D-ribulose 5-phosphate. It functions in the pathway carbohydrate degradation; pentose phosphate pathway; D-ribose 5-phosphate from D-ribulose 5-phosphate (non-oxidative stage): step 1/1. Its function is as follows. Catalyzes the reversible conversion of ribose-5-phosphate to ribulose 5-phosphate. This is Ribose-5-phosphate isomerase A from Dinoroseobacter shibae (strain DSM 16493 / NCIMB 14021 / DFL 12).